Consider the following 321-residue polypeptide: Thioredoxin reductase tcpT (321 aa).

FAD is bound by residues 14 to 17, 36 to 41, H49, and A114; these read GGPA and DSGRYR. A disulfide bridge connects residues C138 and C141. Residues D282 and 289-290 each bind FAD; that span reads NV.

This sequence belongs to the class-II pyridine nucleotide-disulfide oxidoreductase family. Homodimer. FAD is required as a cofactor.

It functions in the pathway secondary metabolite biosynthesis. Functionally, thioredoxin reductase; part of the gene cluster that mediates the biosynthesis of an unusual class of epipolythiodioxopiperazines (ETPs) lacking the reactive thiol group important for toxicity. Firstly, L-tyrosine is prenylated by tcpD, before undergoing condensation with L-glycine in a reaction catalyzed by the NRPS tcpP leading to the diketopiperazine (DKP) backbone. Afterwards the alpha-carbon of tyrosine is oxidized by the cytochrome P450 tcpC to form a hydroxyl group. However, in contrast other ETP biosynthesis pathways studied so far, tcpC is not able to bishydroxylate the DKP at both alpha-carbon positions, but hydroxylates the alpha-carbon of the tyrosine part and the nitrogen of the glycine part. The next steps involve an alpha,beta-elimination reaction catalyzed by tcpI, a methylation by the methyltransferase tcpN the action of the four enzyme cascade tcpG/K/J/I. Due to a dysfunctional cytochrome P450 monooxygenase tcpC, the pathway leads to the biosynthesis of probable non-toxic metabolites lacking the reactive thiol group. This is Thioredoxin reductase tcpT from Claviceps purpurea (strain 20.1) (Ergot fungus).